We begin with the raw amino-acid sequence, 706 residues long: GDNF-inducible zinc finger protein 1 (706 aa).

Residues 31-103 (CDVTVSIENQ…VYTAKVRVEE (73 aa)) form the BTB domain. The span at 149–165 (VEASSGPQVSVTPSSKA) shows a compositional bias: polar residues. 2 disordered regions span residues 149–220 (VEAS…PKIR) and 242–308 (RRLR…KDGE). 2 stretches are compositionally biased toward basic and acidic residues: residues 197-212 (PSKKCKEKLDKKKDVA) and 242-277 (RRLREQQKSAEEAAENDKCPQDQSPDNERMETEPAA). C2H2-type zinc fingers lie at residues 315–337 (FQCTVCDKAFLYEKSFLKHIKYH), 346–369 (YRCDTCGQTFANRCNLKSHQRHVH), 375–398 (FPCEMCAKKFKRKKDVKRHVLQVH), 405–427 (HRCGQCGKGLSSKTALRLHERTH), 433–455 (YGCTKCDAKFSQPSALKTHLRVH), 461–483 (FVCDECGARFTQNHMLIYHKRCH), 489–511 (FMCETCGKSFASKEYLKHHNRIH), 517–539 (FKCEVCLRTFAQRNSLYQHIKVH), 545–567 (YCCDQCGKQFTQVNALQRHHRIH), and 573–595 (YMCNACGRTFTDKSTLRRHTSIH). Ser-611 bears the Phosphoserine mark.

Belongs to the krueppel C2H2-type zinc-finger protein family. Interacts with NCL. Expressed in several tissues, with highest levels in liver. Also expressed in embryos from 7 to 17 dpc.

It localises to the nucleus. The protein resides in the cytoplasm. Its subcellular location is the nucleolus. Its function is as follows. Transcriptional repressor that binds the GZF1 responsive element (GRE) (consensus: 5'-TGCGCN[TG][CA]TATA-3'). May be regulating VSX2/HOX10 expression. The protein is GDNF-inducible zinc finger protein 1 of Mus musculus (Mouse).